A 289-amino-acid polypeptide reads, in one-letter code: MAGAKEIRTKISSVQSTQKITKAMEMVAASKMRKTQDRMSSSRPYSKAIQGVISHISKANIDYQHPFLIEREVKNVGILIISTDRGLCGGLNVNLFKTALSEIKNWKEQNVDVSLGLIGAKGIGFFQSLGLKIKAQHSGMGDTPVAEELIGIANRMFEAYKEGKIDAIYVTYNKFINTMSQKPIMEKLVPLPELDNDSLGKNSDNWEYIYEPNPQTLLDSLLVRYLESQVYQAVVENLASEQAARMVAMKAATDNAGNLINDLQLVYNKARQASITNELNEIVAGAAAI.

This sequence belongs to the ATPase gamma chain family. As to quaternary structure, F-type ATPases have 2 components, CF(1) - the catalytic core - and CF(0) - the membrane proton channel. CF(1) has five subunits: alpha(3), beta(3), gamma(1), delta(1), epsilon(1). CF(0) has three main subunits: a, b and c.

Its subcellular location is the cell inner membrane. Produces ATP from ADP in the presence of a proton gradient across the membrane. The gamma chain is believed to be important in regulating ATPase activity and the flow of protons through the CF(0) complex. This chain is ATP synthase gamma chain, found in Histophilus somni (strain 2336) (Haemophilus somnus).